The following is a 130-amino-acid chain: Small ribosomal subunit protein uS9 (130 aa).

The disordered stretch occupies residues 102–130; that stretch reads GFLTRDPRKKERKKYGLKKARKSPQFSKR. Basic residues predominate over residues 111–130; that stretch reads KERKKYGLKKARKSPQFSKR.

This sequence belongs to the universal ribosomal protein uS9 family.

The chain is Small ribosomal subunit protein uS9 from Finegoldia magna (strain ATCC 29328 / DSM 20472 / WAL 2508) (Peptostreptococcus magnus).